Here is a 93-residue protein sequence, read N- to C-terminus: Putative aspartate aminotransferase (93 aa).

The protein belongs to the class-I pyridoxal-phosphate-dependent aminotransferase family. In terms of assembly, homodimer. The cofactor is pyridoxal 5'-phosphate.

It localises to the cytoplasm. The catalysed reaction is L-aspartate + 2-oxoglutarate = oxaloacetate + L-glutamate. The protein is Putative aspartate aminotransferase of Methylorubrum extorquens (Methylobacterium dichloromethanicum).